The primary structure comprises 533 residues: Flavin-dependent halogenase gsfI (533 aa).

Residues Gly14, Gly17, and Glu47 each coordinate FAD. Chloride contacts are provided by Ser331 and Gly332.

It belongs to the flavin-dependent halogenase family.

The enzyme catalyses griseophenone C + FADH2 + chloride + O2 = griseophenone B + FAD + 2 H2O + H(+). The protein operates within secondary metabolite biosynthesis; terpenoid biosynthesis. Functionally, flavin-dependent halogenase; part of the gene cluster that mediates the biosynthesis of griseofulvin, an important antifungal drug that has been in use for a long time for treating dermatophyte infections. The first step of the pathway is the formation of the heptaketide backbone by gsfA which is initiated by priming with acetyl-CoA, followed by sequential condensations of 6 malonyl-CoA units. The resulting benzophenone can undergo a spontaneous dehydration to form norlichexanthone. However, the true precursor for the griseofulvin biosynthesis is not norlichexanthone, but the heptaketide benzophenone that is O-methylated at 3-OH by gsfB to produce griseophenone D which is further methylated at 9-OH by gsfC to yield griseophenone C. Griseophenone C is then substrate of halogenase gsfI which is responsible for the regio-specific chlorination at the C13 position to form griseophenone B. The cytochrome P450 gsfF catalyzes the coupling of orcinol and phloroglucinol rings in griseophenone B to form desmethyl-dehydrogriseofulvin A which is further methylated at 5-OH by gsfD to yield dehydrogriseofulvin. Finally, gsfE performs stereospecific reduction of enone 18 of dehydrogriseofulvin to afford the final product griseofulvin. In Penicillium aethiopicum, this protein is Flavin-dependent halogenase gsfI.